Reading from the N-terminus, the 500-residue chain is Replicase polyprotein 1ab (500 aa).

The CoV Nsp1 globular domain maps to 54–196; sequence LVNHVRVDCS…PWSILLRKGG (143 aa). The region spanning 352–500 is the Peptidase C16 domain; that stretch reads AFDAIYSETL…MCKCSFKAYF (149 aa). The active-site For PL1-PRO activity is the Cys389. The segment at 466–494 adopts a C4-type zinc-finger fold; that stretch reads CLKCGMELKLQGLDAVFFYGDVVSHMCKC.

The protein belongs to the coronaviruses polyprotein 1ab family.

Functionally, the replicase polyprotein of coronaviruses is a multifunctional protein: it contains the activities necessary for the transcription of negative stranded RNA, leader RNA, subgenomic mRNAs and progeny virion RNA as well as proteinases responsible for the cleavage of the polyprotein into functional products. The papain-like proteinase 1 (PL1-PRO) is responsible for the cleavages located at the N-terminus of the replicase polyprotein. Activity of PL1-PRO is strongly dependent on zinc. Its function is as follows. Non-structural protein 1: binds to the 40S ribosomal subunit and inhibits host translation. The nsp1-40S ribosome complex further induces an endonucleolytic cleavage near the 5'UTR of host mRNAs, targeting them for degradation. By suppressing host gene expression, nsp1 facilitates efficient viral gene expression in infected cells and evasion from host immune response. The polypeptide is Replicase polyprotein 1ab (rep) (Mus musculus (Mouse)).